Here is a 288-residue protein sequence, read N- to C-terminus: Pyridoxal kinase PdxY (288 aa).

Substrate is bound by residues S12 and 47–48; that span reads TQ. ATP contacts are provided by residues D114, E151, K184, and 211–214; that span reads RPLL. A substrate-binding site is contributed by D225.

Belongs to the pyridoxine kinase family. PdxY subfamily. As to quaternary structure, homodimer. The cofactor is Mg(2+).

It carries out the reaction pyridoxal + ATP = pyridoxal 5'-phosphate + ADP + H(+). Its pathway is cofactor metabolism; pyridoxal 5'-phosphate salvage; pyridoxal 5'-phosphate from pyridoxal: step 1/1. Pyridoxal kinase involved in the salvage pathway of pyridoxal 5'-phosphate (PLP). Catalyzes the phosphorylation of pyridoxal to PLP. The chain is Pyridoxal kinase PdxY from Pseudomonas syringae pv. syringae (strain B728a).